The chain runs to 545 residues: MSKYIFVTGGVVSSLGKGAAGAALGALLEARGLKVTMLKLDPYINVDPGTMSPFQHGEVFVTADGAETDLDLGHYERFLSTRMGKRNNFTTGLVYQTVIEKERRGDYLGRTVQVIPHVTDEIKRRIRLGAADADVALVEIGGTVGDIESQPFLEAIRQMAVEEERGDTLFMHLTLVPYLASAGEMKTKPTQHSVRELRAIGIQPDVLLCRADRPIPADHRAKIGLFSNLPEKAVISAIDTDSIYRIPLLFHAQGLDDLVVQNLGLHLSAPDLSVWNGIINALEHPEGEVVIALVGKYVGLTESYKSLAEALLHAGLRARRSVRFLYVDAEDVETQGTEILAEADAILVPGGFGGRGTEGKIASIRHARERKVPYLGICLGMQLAVVEFARHRAGLMNANSTELDPQTPAPVITLMTEWSDPEGHKAYREEGGNLGGTMRLGEQECRLEPDSLAIQAYGQERIHERHRHRFEFNNRYREPLAMAGLRYTGFSADSELVEVVELPDHPWFLGCQFHPEFTSNPREGHPLFDAFMRAAIAQRERDGSS.

The interval 1–265 (MSKYIFVTGG…DDLVVQNLGL (265 aa)) is amidoligase domain. Ser13 contacts CTP. Ser13 contacts UTP. ATP is bound by residues 14–19 (SLGKGA) and Asp71. Mg(2+)-binding residues include Asp71 and Glu139. Residues 146–148 (DIE), 186–191 (KTKPTQ), and Lys222 each bind CTP. UTP is bound by residues 186 to 191 (KTKPTQ) and Lys222. Residues 290-541 (VIALVGKYVG…MRAAIAQRER (252 aa)) form the Glutamine amidotransferase type-1 domain. Residue Gly351 coordinates L-glutamine. Cys378 functions as the Nucleophile; for glutamine hydrolysis in the catalytic mechanism. Residues 379–382 (LGMQ), Glu402, and Arg469 contribute to the L-glutamine site. Residues His514 and Glu516 contribute to the active site.

The protein belongs to the CTP synthase family. In terms of assembly, homotetramer.

It catalyses the reaction UTP + L-glutamine + ATP + H2O = CTP + L-glutamate + ADP + phosphate + 2 H(+). The enzyme catalyses L-glutamine + H2O = L-glutamate + NH4(+). The catalysed reaction is UTP + NH4(+) + ATP = CTP + ADP + phosphate + 2 H(+). It functions in the pathway pyrimidine metabolism; CTP biosynthesis via de novo pathway; CTP from UDP: step 2/2. With respect to regulation, allosterically activated by GTP, when glutamine is the substrate; GTP has no effect on the reaction when ammonia is the substrate. The allosteric effector GTP functions by stabilizing the protein conformation that binds the tetrahedral intermediate(s) formed during glutamine hydrolysis. Inhibited by the product CTP, via allosteric rather than competitive inhibition. Catalyzes the ATP-dependent amination of UTP to CTP with either L-glutamine or ammonia as the source of nitrogen. Regulates intracellular CTP levels through interactions with the four ribonucleotide triphosphates. In Acidithiobacillus ferrooxidans (strain ATCC 23270 / DSM 14882 / CIP 104768 / NCIMB 8455) (Ferrobacillus ferrooxidans (strain ATCC 23270)), this protein is CTP synthase.